Here is a 398-residue protein sequence, read N- to C-terminus: Stimulator of interferon genes protein (398 aa).

The Cytoplasmic segment spans residues 1-16 (MSVMGEDALVPRARSR). The chain crosses the membrane as a helical span at residues 17–37 (LPVMCAAGLGFLTLAVAWLLD). Topologically, residues 38–44 (SDKFSER) are lumenal. A helical membrane pass occupies residues 45 to 65 (AGIIAFGLMLERFIYCICLLA). The Cytoplasmic portion of the chain corresponds to 66–91 (EELLFHSRQRYHGRMSEIFRACFRGS). Residues 92-112 (GILGMCAIFLMLMLGGVSFSV) form a helical membrane-spanning segment. The Lumenal portion of the chain corresponds to 113-120 (KQWSHFNL). The helical transmembrane segment at 121 to 141 (MCAGYMLLNSLGVLGPAPVEI) threads the bilayer. Over 142–398 (SEICEAKKMN…FNPSSAMKQN (257 aa)) the chain is Cytoplasmic. Residues 150–331 (MNVAHGLAWS…QNLKQQDGEI (182 aa)) form a cyclic dinucleotide-binding domain (CBD) region. 2',3'-cGAMP is bound by residues Ser159, Tyr164, Arg230, and Thr254. 3',3'-c-di-GMP-binding positions include Ser159, Tyr164, 230-233 (RSYT), and Thr254. The segment at 375–398 (PQSLRSEPVETTDYFNPSSAMKQN) is disordered. The segment covering 387 to 398 (DYFNPSSAMKQN) has biased composition (polar residues).

It belongs to the STING family. As to quaternary structure, homodimer; forms a homodimer in absence of cyclic nucleotide (c-di-GMP or cGAMP). Homotetramer; in presence of cyclic nucleotide (c-di-GMP or cGAMP), forms tetramers and higher-order oligomers through side-by-side packing. Interacts (when phosphorylated) with irf3; following activation and phosphorylation by tbk1, recruits irf3. Phosphorylation by TBK1 leads to activation and production of IFN-beta. Following cyclic nucleotide (c-di-GMP or cGAMP)-binding, activation and translocation from the endoplasmic reticulum, STING1 is phosphorylated by tbk1, leading to recruitment of the transcription factor irf3 to induce type-I interferons and other cytokines.

The protein resides in the endoplasmic reticulum membrane. The protein localises to the cytoplasm. It localises to the perinuclear region. Its subcellular location is the endoplasmic reticulum-Golgi intermediate compartment membrane. It is found in the golgi apparatus membrane. The protein resides in the cytoplasmic vesicle. The protein localises to the autophagosome membrane. The enzyme catalyses H(+)(in) = H(+)(out). Its function is as follows. Facilitator of innate immune signaling that acts as a sensor of cytosolic DNA from bacteria and viruses and promotes the production of type I interferon (IFN-alpha and IFN-beta). Innate immune response is triggered in response to non-CpG double-stranded DNA from viruses and bacteria delivered to the cytoplasm. Acts by binding cyclic dinucleotides: recognizes and binds cyclic di-GMP (c-di-GMP), a second messenger produced by bacteria, and cyclic GMP-AMP (cGAMP), a messenger produced by CGAS in response to DNA virus in the cytosol. Upon binding of c-di-GMP or cGAMP, STING1 oligomerizes and is able to activate both NF-kappa-B and irf3 transcription pathways to induce expression of type I interferon and exert a potent anti-viral state. Exhibits 2',3' phosphodiester linkage-specific ligand recognition: can bind both 2'-3' linked cGAMP and 3'-3' linked cGAMP but is preferentially activated by 2'-3' linked cGAMP. In addition to promote the production of type I interferons, plays a direct role in autophagy. Following cGAMP-binding, STING1 buds from the endoplasmic reticulum into COPII vesicles, which then form the endoplasmic reticulum-Golgi intermediate compartment (ERGIC). The ERGIC serves as the membrane source for LC3 lipidation, leading to formation of autophagosomes that target cytosolic DNA or DNA viruses for degradation by the lysosome. Promotes autophagy by acting as a proton channel that directs proton efflux from the Golgi to facilitate LC3 lipidation. The autophagy- and interferon-inducing activities can be uncoupled and autophagy induction is independent of TBK1 phosphorylation. The chain is Stimulator of interferon genes protein from Danio rerio (Zebrafish).